A 280-amino-acid chain; its full sequence is MEWIQAAILGIVQGLTEFLPISSSAHIFIVGKLMGLGDPGAAFTAVSQLGTEAAVIVFFWRDIVRIIKHWGLSIAGKIPRNDPDARMGWLVVAGSIPIIVVGLFFQNAIEVTFRNLWIVATTLIVFGVILAVADAVGKHERKLEELTVKHGILYGLAQCLALIPGVSRSGGTITAGLLMGYTREAAARYSFLLAIPAVLGSGFYELFKIVAKHENAGDTFNLGQTALATVIAFVVGYLIIGWFLKFISHNSYRGFVWYRIALGLVVFVLLGFGVIPATLS.

Helical transmembrane passes span 1–21, 40–60, 89–109, 116–136, 146–166, 191–211, 227–247, and 260–280; these read MEWI…FLPI, GAAF…VFFW, WLVV…QNAI, LWIV…ADAV, LTVK…IPGV, FLLA…KIVA, LATV…LKFI, and IALG…ATLS.

It belongs to the UppP family.

It is found in the cell membrane. The catalysed reaction is di-trans,octa-cis-undecaprenyl diphosphate + H2O = di-trans,octa-cis-undecaprenyl phosphate + phosphate + H(+). Catalyzes the dephosphorylation of undecaprenyl diphosphate (UPP). Confers resistance to bacitracin. In Renibacterium salmoninarum (strain ATCC 33209 / DSM 20767 / JCM 11484 / NBRC 15589 / NCIMB 2235), this protein is Undecaprenyl-diphosphatase.